The chain runs to 184 residues: Putative manganese efflux pump MntP (184 aa).

6 helical membrane passes run 12-32 (SIMA…MGMI), 39-59 (IIYI…FGML), 63-83 (LLSG…LLVL), 99-119 (FIAP…LDSF), 132-152 (VWMT…LGLL), and 164-184 (YSGA…LFPL).

This sequence belongs to the MntP (TC 9.B.29) family.

The protein resides in the cell membrane. In terms of biological role, probably functions as a manganese efflux pump. This is Putative manganese efflux pump MntP from Bacillus pumilus (strain SAFR-032).